Here is an 85-residue protein sequence, read N- to C-terminus: Elicitor peptide 7 (85 aa).

The propeptide occupies 1–62; that stretch reads MEGEGRREDG…TEVVNIPRSV (62 aa). Residues 66 to 85 form a disordered region; the sequence is NVAARKGKQQTSSGKGGGTN.

The protein belongs to the brassicaceae elicitor peptide family.

Elicitor of plant defense. In Arabidopsis thaliana (Mouse-ear cress), this protein is Elicitor peptide 7 (PEP7).